The primary structure comprises 851 residues: MATNYCDEFERNPTRNPRTGRTIKRGGPVFRALERECSDGAARVFPAAAVRGAAAARAASPRVAAASPCPEFARDPTRNPRTGRPIKRGGPVFRALERECADYGGASPRRVSPARAFPNRRVSPARRQSPAEAAEASPCPEFARDPTRNPRTGRTIKRGGPTYRALEAECADYGRLSPIRSPWSDWSSTGLSPFRSHMRKSPARRSPARRSPARRSLARYTEHLTSDSETEVDYDARNVIRSQVGPGGVCERFAADPTRNPVTGSPLSRNDPLYTDLMEICKGYPDTPLTKSLTGEGTDDDTCEAFCRDPTRNPVTGQKMRRNGIEYQMFAEECDCSGISRPSGVSRTSGTSGSSGSSASSRPPNSFEAPGASSRPPNSFEASGAARVPGTPSVSRGEPRWMSSISTRHNYDESNPMSVAFRLRHVKDIRKFLRTVRPGRSGFCATDKGGWLGSAAVSDNVIGQGSWGSVHMVKFRDFPEEFVVKEAVLMSVSEKHRYKPTVVWDEWAAGSVPDEVVVNNMVTEIAATGMTPFVPLTAGAGACDSCNPQLLEKAAKVTKCYLQAMEAADFSLDRVLPTMSPDQAASALAQILLGLQSLQTTLGIMHNDIKAHNILVKRVPPGGYWKVTDSFNGQVFYIPNEGYLCMLADYGVVRLVKPAVGMDTLYGTRNARFVPRDVGRWGKGAGTEYVVTPIRSKISVVVRGGRFVGVEPNKAVRYWKNTDTSKVGDVITTNNVFYMGYDIEPDMQVQLDDTNSFPVWESRGDVADCVRTFVGGKRASQPGFHRLFYKKTGSAWEKAAETVAKQNPLFSGFTLDGSGLKYIRAATACAYIFPGMAVPRPGEREIESFTM.

Disordered stretches follow at residues 1-24, 61-91, 104-160, 190-216, and 340-400; these read MATN…RTIK, PRVA…RGGP, GGAS…KRGG, GLSP…ARRS, and SRPS…GEPR. The span at 125-141 shows a compositional bias: low complexity; the sequence is ARRQSPAEAAEASPCPE. The span at 196–216 shows a compositional bias: basic residues; sequence SHMRKSPARRSPARRSPARRS. Residues 340-366 show a composition bias toward low complexity; the sequence is SRPSGVSRTSGTSGSSGSSASSRPPNS. Residues 456–851 enclose the Protein kinase domain; sequence AVSDNVIGQG…GEREIESFTM (396 aa). ATP-binding positions include 462–470 and K485; that span reads IGQGSWGSV. The active-site Proton acceptor is D608.

This sequence belongs to the protein kinase superfamily. Ser/Thr protein kinase family.

It carries out the reaction L-seryl-[protein] + ATP = O-phospho-L-seryl-[protein] + ADP + H(+). The catalysed reaction is L-threonyl-[protein] + ATP = O-phospho-L-threonyl-[protein] + ADP + H(+). This Dryophytes versicolor (chameleon treefrog) protein is Putative serine/threonine-protein kinase 019R.